A 221-amino-acid polypeptide reads, in one-letter code: Oxaloacetate tautomerase FAHD1, mitochondrial (221 aa).

The transit peptide at 1–24 (MASTKPLSRFWEWGKNIVCVGRNY) directs the protein to the mitochondrion. Arg22 lines the oxalate pocket. Position 37 is a phosphoserine (Ser37). Mg(2+) is bound by residues Glu68, Glu70, and Asp99. Residue Lys110 is modified to N6-acetyllysine. N6-succinyllysine is present on Lys112. Lys120 provides a ligand contact to oxalate.

The protein belongs to the FAH family. Homodimer. Mg(2+) is required as a cofactor. It depends on Mn(2+) as a cofactor. As to expression, ubiquitous with higher expression in the liver and the kidney (at protein level).

It is found in the mitochondrion. The protein resides in the cytoplasm. Its subcellular location is the cytosol. The catalysed reaction is oxaloacetate = enol-oxaloacetate. The enzyme catalyses oxaloacetate + H(+) = pyruvate + CO2. It catalyses the reaction a 3-acylpyruvate + H2O = a carboxylate + pyruvate + H(+). It carries out the reaction acetylpyruvate + H2O = acetate + pyruvate + H(+). The catalysed reaction is 3-fumarylpyruvate + H2O = fumarate + pyruvate + H(+). Oxaloacetate decarboxylation is potently and competitively inhibited by oxalate. In terms of biological role, tautomerase that converts enol-oxaloacetate, a strong inhibitor of succinate dehydrogenase, to the physiological keto form of oxaloacetate. It is thereby required to maximize aerobic respiration efficiency by preventing succinate dehydrogenase inhibition. Also acts as a weak oxaloacetate decarboxylase (ODx), catalyzing the decarboxylation of oxaloacetate (OAA) to pyruvate and CO(2), and as such is likely a regulatory enzyme in the TCA cycle. Also displays acylpyruvase activity, being able to hydrolyze acetylpyruvate and fumarylpyruvate in vitro. The polypeptide is Oxaloacetate tautomerase FAHD1, mitochondrial (Mus musculus (Mouse)).